A 473-amino-acid polypeptide reads, in one-letter code: Deoxyribodipyrimidine photo-lyase (473 aa).

The region spanning 2–134 (PTHLVWFRRD…ICEGFDDSVI (133 aa)) is the Photolyase/cryptochrome alpha/beta domain. (6R)-5,10-methylene-5,6,7,8-tetrahydrofolate-binding residues include Asn109 and Glu110. Tyr224 contacts FAD. Arg228 provides a ligand contact to DNA. FAD is bound at residue 236-240 (TSRLS). Interaction with DNA regions lie at residues 276–283 (ELIWREFY) and 343–344 (NR). An FAD-binding site is contributed by 374-376 (DGD). Residue Gln406 participates in DNA binding.

The protein belongs to the DNA photolyase class-1 family. As to quaternary structure, monomer. The cofactor is FAD. (6R)-5,10-methylene-5,6,7,8-tetrahydrofolate is required as a cofactor.

It catalyses the reaction cyclobutadipyrimidine (in DNA) = 2 pyrimidine residues (in DNA).. Functionally, involved in repair of UV radiation-induced DNA damage. Catalyzes the light-dependent monomerization (300-600 nm) of cyclobutyl pyrimidine dimers (in cis-syn configuration), which are formed between adjacent bases on the same DNA strand upon exposure to ultraviolet radiation. The protein is Deoxyribodipyrimidine photo-lyase (phrB) of Salmonella typhimurium (strain LT2 / SGSC1412 / ATCC 700720).